The sequence spans 430 residues: Enolase (430 aa).

Residue Gln167 coordinates (2R)-2-phosphoglycerate. Glu209 acts as the Proton donor in catalysis. Residues Asp246, Glu289, and Asp316 each contribute to the Mg(2+) site. Residues Lys341, Arg370, Ser371, and Lys392 each coordinate (2R)-2-phosphoglycerate. Lys341 functions as the Proton acceptor in the catalytic mechanism.

Belongs to the enolase family. In terms of assembly, component of the RNA degradosome, a multiprotein complex involved in RNA processing and mRNA degradation. Mg(2+) serves as cofactor.

The protein localises to the cytoplasm. It localises to the secreted. Its subcellular location is the cell surface. It carries out the reaction (2R)-2-phosphoglycerate = phosphoenolpyruvate + H2O. Its pathway is carbohydrate degradation; glycolysis; pyruvate from D-glyceraldehyde 3-phosphate: step 4/5. Its function is as follows. Catalyzes the reversible conversion of 2-phosphoglycerate (2-PG) into phosphoenolpyruvate (PEP). It is essential for the degradation of carbohydrates via glycolysis. The polypeptide is Enolase (Alteromonas mediterranea (strain DSM 17117 / CIP 110805 / LMG 28347 / Deep ecotype)).